A 420-amino-acid polypeptide reads, in one-letter code: Bile acid-CoA:amino acid N-acyltransferase (420 aa).

Lys-40 is modified (N6-succinyllysine). Ser-125 bears the Phosphoserine mark. Catalysis depends on charge relay system residues Cys-235 and Asp-328. Residues Lys-346 and Lys-350 each carry the N6-succinyllysine modification. The Charge relay system role is filled by His-362. Lys-409 is modified (N6-succinyllysine). A Phosphoserine modification is found at Ser-418.

It belongs to the C/M/P thioester hydrolase family. Monomer. As to expression, highly expressed in liver, kidney, gallbladder, proximal intestine and distal intestine. Weakly expressed in adrenal gland, lung, brain and muscle.

It is found in the cytoplasm. The protein localises to the cytosol. The protein resides in the peroxisome. It catalyses the reaction choloyl-CoA + glycine = glycocholate + CoA + H(+). The enzyme catalyses hexadecanoyl-CoA + H2O = hexadecanoate + CoA + H(+). It carries out the reaction choloyl-CoA + H2O = cholate + CoA + H(+). The catalysed reaction is chenodeoxycholoyl-CoA + H2O = chenodeoxycholate + CoA + H(+). It catalyses the reaction eicosanoyl-CoA + H2O = eicosanoate + CoA + H(+). The enzyme catalyses octadecanoyl-CoA + H2O = octadecanoate + CoA + H(+). It carries out the reaction docosanoyl-CoA + H2O = docosanoate + CoA + H(+). The catalysed reaction is tetracosanoyl-CoA + H2O = tetracosanoate + CoA + H(+). It catalyses the reaction hexacosanoyl-CoA + H2O = hexacosanoate + CoA + H(+). The enzyme catalyses dodecanoyl-CoA + H2O = dodecanoate + CoA + H(+). It carries out the reaction tetradecanoyl-CoA + H2O = tetradecanoate + CoA + H(+). The catalysed reaction is choloyl-CoA + taurine = taurocholate + CoA + H(+). It catalyses the reaction chenodeoxycholoyl-CoA + glycine = glycochenodeoxycholate + CoA + H(+). The enzyme catalyses chenodeoxycholoyl-CoA + taurine = taurochenodeoxycholate + CoA + H(+). It carries out the reaction eicosanoyl-CoA + glycine = N-eicosanoylglycinate + CoA + H(+). The catalysed reaction is hexacosanoyl-CoA + glycine = N-hexacosanoylglycine + CoA + H(+). It catalyses the reaction docosanoyl-CoA + glycine = N-docosanoylglycine + CoA + H(+). Functionally, catalyzes the amidation of bile acids (BAs) with the amino acid taurine. Selective for taurine conjugation of cholyl CoA and only taurine-conjugated BAs are found in bile. Amidation of BAs in the liver with taurine prior to their excretion into bile is an important biochemical event in bile acid metabolism. This conjugation (or amidation) plays several important biological roles in that it promotes the secretion of BAs and cholesterol into bile and increases the detergent properties of BAs in the intestine, which facilitates lipid and vitamin absorption. May also act as an acyl-CoA thioesterase that regulates intracellular levels of free fatty acids. In vitro, catalyzes the hydrolysis of long- and very long-chain saturated acyl-CoAs to the free fatty acid and coenzyme A (CoASH), and conjugates glycine to these acyl-CoAs. This Mus musculus (Mouse) protein is Bile acid-CoA:amino acid N-acyltransferase (Baat).